Reading from the N-terminus, the 177-residue chain is UPF0102 protein BPP4042 (177 aa).

The interval Ala-13–Arg-43 is disordered.

It belongs to the UPF0102 family.

This Bordetella parapertussis (strain 12822 / ATCC BAA-587 / NCTC 13253) protein is UPF0102 protein BPP4042.